The sequence spans 51 residues: Large ribosomal subunit protein eL39 (51 aa).

It belongs to the eukaryotic ribosomal protein eL39 family.

The polypeptide is Large ribosomal subunit protein eL39 (RpL39) (Drosophila melanogaster (Fruit fly)).